The primary structure comprises 382 residues: Putative glutamate--cysteine ligase 2-1 (382 aa).

The protein belongs to the glutamate--cysteine ligase type 2 family. YbdK subfamily.

The catalysed reaction is L-cysteine + L-glutamate + ATP = gamma-L-glutamyl-L-cysteine + ADP + phosphate + H(+). ATP-dependent carboxylate-amine ligase which exhibits weak glutamate--cysteine ligase activity. The chain is Putative glutamate--cysteine ligase 2-1 from Frankia alni (strain DSM 45986 / CECT 9034 / ACN14a).